The following is a 60-amino-acid chain: Metallothionein (60 aa).

Residues 1–28 are beta; the sequence is MDPCECSKTGKCSCGGSCTCTNCSCTSC. Positions 4, 6, 12, 14, 18, 20, 23, 25, 28, 32, 33, 35, 36, 40, 43, 47, 49, 54, 58, and 59 each coordinate a divalent metal cation. The alpha stretch occupies residues 29-60; the sequence is KKSCCPCCPSGCSKCASGCVCKGKTCDTSCCQ.

It belongs to the metallothionein superfamily. Type 1 family.

Functionally, metallothioneins have a high content of cysteine residues that bind various heavy metals. In Chelon auratus (Golden grey mullet), this protein is Metallothionein (mt).